Consider the following 397-residue polypeptide: Odorant receptor 22a (397 aa).

Topologically, residues 1–49 are cytoplasmic; the sequence is MLSKFFPHIKEKPLSERVKSRDAFIYLDRVMWSFGWTEPENKRWILPYK. Residues 50–70 form a helical membrane-spanning segment; that stretch reads LWLAFVNIVMLILLPISISIE. Topologically, residues 71–86 are extracellular; the sequence is YLHRFKTFSAGEFLSS. Residues 87-107 form a helical membrane-spanning segment; that stretch reads LEIGVNMYGSSFKCAFTLIGF. Topologically, residues 108-136 are cytoplasmic; it reads KKRQEAKVLLDQLDKRCLSDKERSTVHRY. Residues 137 to 157 traverse the membrane as a helical segment; that stretch reads VAMGNFFDILYHIFYSTFVVM. At 158 to 182 the chain is on the extracellular side; that stretch reads NFPYFLLERRHAWRMYFPYIDSDEQ. A helical membrane pass occupies residues 183-203; sequence FYISSIAECFLMTEAIYMDLC. Over 204–263 the chain is Cytoplasmic; it reads TDVCPLISMLMARCHISLLKQRLRNLRSKPGRTEDEYLEELTECIRDHRLLLDYVDALRP. Residues 264–280 traverse the membrane as a helical segment; it reads VFSGTIFVQFLLIGTVL. The Extracellular portion of the chain corresponds to 281-286; sequence GLSMIN. Residues 287–304 traverse the membrane as a helical segment; that stretch reads LMFFSTFWTGVATCLFMF. Residues 305-356 are Cytoplasmic-facing; the sequence is DVSMETFPFCYLCNMIIDDCQEMSNCLFQSDWTSADRRYKSTLVYFLHNLQQ. The helical transmembrane segment at 357 to 377 threads the bilayer; it reads PITLTAGGVFPISMQTNLAMV. Residues 378–397 lie on the Extracellular side of the membrane; it reads KLAFSVVTVIKQFNLAERFQ.

The protein belongs to the insect chemoreceptor superfamily. Heteromeric odorant receptor channel (TC 1.A.69) family. Or2a subfamily. As to quaternary structure, interacts with Orco, via conserved C-terminal cytoplasmic loops. Complexes exist early in the endomembrane system in olfactory sensory neurons (OSNs), coupling these complexes to the conserved ciliary trafficking pathway. Interacts with snmp1. In terms of tissue distribution, expressed with Orco in 17-20 sensory neurons on the medial-proximal edge of the antenna. Expressed in the ab3A neuron which responds to ethyl butyrate.

It localises to the cell membrane. Odorant receptor which mediates acceptance or avoidance behavior, depending on its substrates. The odorant receptor repertoire encodes a large collection of odor stimuli that vary widely in identity, intensity, and duration. Involved in the behavioral responses ethyl butyrate and to esters in more general. Complexes with Orco to form odorant-sensing units, providing sensitive and prolonged odorant signaling and calcium permeability. They are necessary and sufficient to promote functional reconstitution of odor-evoked signaling in sensory neurons that normally respond only to carbon dioxide. In Drosophila melanogaster (Fruit fly), this protein is Odorant receptor 22a (Or22a).